A 364-amino-acid polypeptide reads, in one-letter code: Uroporphyrinogen decarboxylase (364 aa).

Residues 49–53 (RQAGR), aspartate 98, tyrosine 173, serine 228, and histidine 341 contribute to the substrate site.

The protein belongs to the uroporphyrinogen decarboxylase family. As to quaternary structure, homodimer.

It localises to the cytoplasm. The catalysed reaction is uroporphyrinogen III + 4 H(+) = coproporphyrinogen III + 4 CO2. It functions in the pathway porphyrin-containing compound metabolism; protoporphyrin-IX biosynthesis; coproporphyrinogen-III from 5-aminolevulinate: step 4/4. In terms of biological role, catalyzes the decarboxylation of four acetate groups of uroporphyrinogen-III to yield coproporphyrinogen-III. The protein is Uroporphyrinogen decarboxylase of Protochlamydia amoebophila (strain UWE25).